Here is a 321-residue protein sequence, read N- to C-terminus: MLFILAVIALLITFILVPILIPTLKRMKFGQSIREEGPQSHMKKTGTPTMGGLTFLISIIITSIIAIFFVDNSNPIILLLFVTIGFGLIGFIDDYIIVVKKNNQGLTSKQKFLAQIAIAVVFFLLSDVFHLVEFSTNLNIPFTNISIPLSFAYVIFIVFWQVGFSNAVNLTDGLDGLATGLSIIGFTMYAIMSFVLDSPAIGAFCIIMIFALLGFLPYNLNPAKVFMGDTGSLALGGIFATISIMLNQELSLLLIGLVFVIETASVMLQVASYKLTKKRIFKMSPIHHHFELSGWGEWKVVTVFWTAGLISGLIGLWIGVH.

Transmembrane regions (helical) follow at residues 1–21 (MLFI…PILI), 50–70 (MGGL…IFFV), 76–96 (IILL…DDYI), 112–132 (FLAQ…FHLV), 140–160 (IPFT…IVFW), 176–196 (GLAT…SFVL), 200–220 (AIGA…PYNL), 225–245 (VFMG…ISIM), 250–270 (LSLL…MLQV), and 300–320 (VVTV…WIGV).

This sequence belongs to the glycosyltransferase 4 family. MraY subfamily. Requires Mg(2+) as cofactor.

It is found in the cell membrane. It carries out the reaction UDP-N-acetyl-alpha-D-muramoyl-L-alanyl-gamma-D-glutamyl-L-lysyl-D-alanyl-D-alanine + di-trans,octa-cis-undecaprenyl phosphate = Mur2Ac(oyl-L-Ala-gamma-D-Glu-L-Lys-D-Ala-D-Ala)-di-trans,octa-cis-undecaprenyl diphosphate + UMP. It participates in cell wall biogenesis; peptidoglycan biosynthesis. In terms of biological role, catalyzes the initial step of the lipid cycle reactions in the biosynthesis of the cell wall peptidoglycan: transfers peptidoglycan precursor phospho-MurNAc-pentapeptide from UDP-MurNAc-pentapeptide onto the lipid carrier undecaprenyl phosphate, yielding undecaprenyl-pyrophosphoryl-MurNAc-pentapeptide, known as lipid I. The chain is Phospho-N-acetylmuramoyl-pentapeptide-transferase from Staphylococcus haemolyticus (strain JCSC1435).